Consider the following 274-residue polypeptide: Phosphatidylglycerol--prolipoprotein diacylglyceryl transferase (274 aa).

The next 4 helical transmembrane spans lie at 24–44 (WYAL…RFLS), 60–80 (LLVW…VVFY), 96–116 (WHGG…TVLF), and 122–142 (LSVA…LFFG). R143 is an a 1,2-diacyl-sn-glycero-3-phospho-(1'-sn-glycerol) binding site. 3 helical membrane passes run 182 to 202 (ATLE…FTAL), 207 to 227 (GQII…AEFF), and 241 to 261 (VTMG…VFVV).

It belongs to the Lgt family.

It localises to the cell inner membrane. It carries out the reaction L-cysteinyl-[prolipoprotein] + a 1,2-diacyl-sn-glycero-3-phospho-(1'-sn-glycerol) = an S-1,2-diacyl-sn-glyceryl-L-cysteinyl-[prolipoprotein] + sn-glycerol 1-phosphate + H(+). Its pathway is protein modification; lipoprotein biosynthesis (diacylglyceryl transfer). In terms of biological role, catalyzes the transfer of the diacylglyceryl group from phosphatidylglycerol to the sulfhydryl group of the N-terminal cysteine of a prolipoprotein, the first step in the formation of mature lipoproteins. In Rhodospirillum rubrum (strain ATCC 11170 / ATH 1.1.1 / DSM 467 / LMG 4362 / NCIMB 8255 / S1), this protein is Phosphatidylglycerol--prolipoprotein diacylglyceryl transferase.